The following is a 226-amino-acid chain: Uracil-DNA glycosylase (226 aa).

Asp-65 functions as the Proton acceptor in the catalytic mechanism.

This sequence belongs to the uracil-DNA glycosylase (UDG) superfamily. UNG family.

The protein resides in the cytoplasm. The enzyme catalyses Hydrolyzes single-stranded DNA or mismatched double-stranded DNA and polynucleotides, releasing free uracil.. Its function is as follows. Excises uracil residues from the DNA which can arise as a result of misincorporation of dUMP residues by DNA polymerase or due to deamination of cytosine. The sequence is that of Uracil-DNA glycosylase from Enterococcus faecalis (strain ATCC 700802 / V583).